Reading from the N-terminus, the 112-residue chain is DIVLTQSPASLAVSLGQRATISCRASESVDNYGISFMNWFQQKPGQPPKLLIYAASNQGSGVPARFSGSGSGTDFSLNIHPMEEDDTAMYFCQQSKEVPPYTFGGGTKLEIK.

A framework-1 region spans residues 1 to 23 (DIVLTQSPASLAVSLGQRATISC). A disulfide bond links Cys23 and Cys92. Residues 24-38 (RASESVDNYGISFMN) form a complementarity-determining-1 region. The segment at 39–53 (WFQQKPGQPPKLLIY) is framework-2. Positions 54–60 (AASNQGS) are complementarity-determining-2. A framework-3 region spans residues 61 to 92 (GVPARFSGSGSGTDFSLNIHPMEEDDTAMYFC). The tract at residues 93 to 102 (QQSKEVPPYT) is complementarity-determining-3. A framework-4 region spans residues 103-112 (FGGGTKLEIK).

This Mus musculus (Mouse) protein is Ig kappa chain V-III region PC 7132.